Here is a 323-residue protein sequence, read N- to C-terminus: Macrolide efflux protein A (323 aa).

Helical transmembrane passes span 6 to 26 (VLSM…AIGV), 51 to 71 (LTIV…VLFI), 105 to 125 (SLQS…YSVW), 128 to 148 (NAII…VLIV), 182 to 202 (FALL…NALF), 219 to 239 (ITEI…GLFG), 245 to 265 (ILLI…SGLL), 270 to 290 (FFIF…YSGV), and 303 to 323 (YLGR…PIGL).

This sequence belongs to the major facilitator superfamily. Drug:H(+) antiporter-3 (DHA3) (TC 2.A.1.21) family.

The protein resides in the cell membrane. Functionally, confers resistance to 14-membered macrolides including erythromycin and to 15-membered macrolides but not to 16-membered macrolides, lincosamides or analogs of streptogramin B. May function as an efflux pump to regulate intracellular macrolide levels. The protein is Macrolide efflux protein A (mefA) of Enterococcus faecalis (Streptococcus faecalis).